The following is a 242-amino-acid chain: tRNA pseudouridine synthase A (242 aa).

The active-site Nucleophile is the Asp51. A substrate-binding site is contributed by Tyr107.

This sequence belongs to the tRNA pseudouridine synthase TruA family. As to quaternary structure, homodimer.

It catalyses the reaction uridine(38/39/40) in tRNA = pseudouridine(38/39/40) in tRNA. Its function is as follows. Formation of pseudouridine at positions 38, 39 and 40 in the anticodon stem and loop of transfer RNAs. The protein is tRNA pseudouridine synthase A of Helicobacter pylori (strain G27).